Reading from the N-terminus, the 204-residue chain is dITP/XTP pyrophosphatase (204 aa).

Residue 8–13 (SRNRKK) coordinates substrate. Aspartate 73 acts as the Proton acceptor in catalysis. Aspartate 73 contacts Mg(2+). Residues serine 74, 155-158 (FGYD), lysine 179, and 184-185 (HR) each bind substrate.

It belongs to the HAM1 NTPase family. As to quaternary structure, homodimer. Requires Mg(2+) as cofactor.

The catalysed reaction is XTP + H2O = XMP + diphosphate + H(+). It catalyses the reaction dITP + H2O = dIMP + diphosphate + H(+). It carries out the reaction ITP + H2O = IMP + diphosphate + H(+). In terms of biological role, pyrophosphatase that catalyzes the hydrolysis of nucleoside triphosphates to their monophosphate derivatives, with a high preference for the non-canonical purine nucleotides XTP (xanthosine triphosphate), dITP (deoxyinosine triphosphate) and ITP. Seems to function as a house-cleaning enzyme that removes non-canonical purine nucleotides from the nucleotide pool, thus preventing their incorporation into DNA/RNA and avoiding chromosomal lesions. In Mycolicibacterium paratuberculosis (strain ATCC BAA-968 / K-10) (Mycobacterium paratuberculosis), this protein is dITP/XTP pyrophosphatase.